Consider the following 264-residue polypeptide: Thymidylate synthase (264 aa).

Arg-21 contacts dUMP. His-51 lines the (6R)-5,10-methylene-5,6,7,8-tetrahydrofolate pocket. A dUMP-binding site is contributed by 126–127 (RR). Cys-146 (nucleophile) is an active-site residue. DUMP contacts are provided by residues 166 to 169 (RSAD), Asn-177, and 207 to 209 (HLY). Asp-169 serves as a coordination point for (6R)-5,10-methylene-5,6,7,8-tetrahydrofolate. Residue Ala-263 participates in (6R)-5,10-methylene-5,6,7,8-tetrahydrofolate binding.

This sequence belongs to the thymidylate synthase family. Bacterial-type ThyA subfamily. Homodimer.

Its subcellular location is the cytoplasm. It catalyses the reaction dUMP + (6R)-5,10-methylene-5,6,7,8-tetrahydrofolate = 7,8-dihydrofolate + dTMP. It functions in the pathway pyrimidine metabolism; dTTP biosynthesis. In terms of biological role, catalyzes the reductive methylation of 2'-deoxyuridine-5'-monophosphate (dUMP) to 2'-deoxythymidine-5'-monophosphate (dTMP) while utilizing 5,10-methylenetetrahydrofolate (mTHF) as the methyl donor and reductant in the reaction, yielding dihydrofolate (DHF) as a by-product. This enzymatic reaction provides an intracellular de novo source of dTMP, an essential precursor for DNA biosynthesis. The protein is Thymidylate synthase of Alkalilimnicola ehrlichii (strain ATCC BAA-1101 / DSM 17681 / MLHE-1).